A 278-amino-acid polypeptide reads, in one-letter code: Neuronal membrane glycoprotein M6-a (278 aa).

At Met1 the chain carries N-acetylmethionine. The Cytoplasmic segment spans residues 1 to 22 (MEENMEEGQTQKGCFECCIKCL). The chain crosses the membrane as a helical span at residues 23-43 (GGIPYASLIATILLYAGVALF). The Extracellular segment spans residues 44-84 (CGCGHEALSGTVNILQTYFEMARTAGDTLDVFTMIDIFKYV). A helical membrane pass occupies residues 85–105 (IYGIAAAFFVYGILLMVEGFF). Over 106 to 127 (TTGAIKDLYGDFKITTCGRCVS) the chain is Cytoplasmic. A helical transmembrane segment spans residues 128–148 (AWFIMLTYLFMLAWLGVTAFT). The Extracellular portion of the chain corresponds to 149–213 (SLPVYMYFNV…STELNMTFHL (65 aa)). Residue Asn164 is glycosylated (N-linked (GlcNAc...) asparagine). The cysteines at positions 174 and 192 are disulfide-linked. N-linked (GlcNAc...) asparagine glycosylation is present at Asn208. Residues 214 to 234 (FIVALAGAGAAVIAMVHYLMV) traverse the membrane as a helical segment. Residues 235–278 (LSANWAYVKDACRMQKYEDIKSKEEQELHDIHSTRSKERLNAYT) are Cytoplasmic-facing. Ser256 bears the Phosphoserine mark. The residue at position 278 (Thr278) is a Phosphothreonine.

It belongs to the myelin proteolipid protein family. As to quaternary structure, interacts with OPRM1. Interacts with palmitoyltransferase ZDHHC17/HIP14; the interaction leads to palmitoylation of GPM6A. In terms of processing, N-glycosylated. Post-translationally, palmitoylated by ZDHHC17/HIP14. Expressed in hippocampus (at protein level). Isoform 1 is the predominant isoform expressed in brain, specifically in hippocampus. Isoform 2 is expressed at low levels in brain and kidney.

It is found in the cell membrane. Its subcellular location is the cell projection. The protein localises to the axon. It localises to the growth cone. The protein resides in the dendritic spine. It is found in the filopodium. Its subcellular location is the neuron projection. In terms of biological role, involved in neuronal differentiation, including differentiation and migration of neuronal stem cells. Plays a role in neuronal plasticity and is involved in neurite and filopodia outgrowth, filopodia motility and probably synapse formation. Gpm6a-induced filopodia formation involves mitogen-activated protein kinase (MAPK) and Src signaling pathways. May be involved in neuronal NGF-dependent Ca(2+) influx. May be involved in regulation of endocytosis and intracellular trafficking of G-protein-coupled receptors (GPCRs); enhances internalization and recycling of mu-type opioid receptor. The chain is Neuronal membrane glycoprotein M6-a (Gpm6a) from Rattus norvegicus (Rat).